Reading from the N-terminus, the 281-residue chain is Probable thioesterase gloN (281 aa).

The segment at 207-233 (LDDGSNNSRDLNETSPTETSNDSETQA) is disordered. Residues 210-232 (GSNNSRDLNETSPTETSNDSETQ) show a composition bias toward polar residues.

It belongs to the AMT4 thioesterase family.

The protein operates within mycotoxin biosynthesis. Its function is as follows. Probable thioesterase; part of the gene cluster that mediates the biosynthesis of pneumocandins, lipohexapeptides of the echinocandin family that prevent fungal cell wall formation by non-competitive inhibition of beta-1,3-glucan synthase. The 10,12-dimethylmyristoyl side chain is synthesized by the reducing polyketide synthase gloL/GLPKS4. The thioesterase gloN/GLHYD exclusively interacts with gloL/GLPKS4 to maintain turnover of the polyketide side chain. The 10R,12S-dimethylmyristic acid is then transferred to the first thiolation domain of the nonribosomal peptide synthetase gloA/GLNRPS4 by the acyl-AMP ligase gloD/GLligase, followed by its acylation to L-ornithine to trigger elongation of the cyclic hexapeptide. L-ornithine, 4R-hydroxyl-L-proline (generated from L-proline by the dioxygenase gloF/GLOXY2), 3S-hydroxyl-L-homotyrosine (generated by gloG/GLHtyB, gloH/GLHtyA, gloI/GLHtyC, gloJ/GLHtyD and hydroxylated at C-3 by the dioxygenase gloM/GLOXY1), 3R-hydroxyl-L-glutamine (generated from L-glutamine probably by the dioxygenase gloE/GLOXY3) and 3S-hydroxyl-L-proline (generated from L-proline by the dioxygenase gloF/GLOXY2 to yield pneumocandin B0), or 3S-hydroxyl-4S-methyl-L-proline (generated from L-leucine by the dioxygenase gloC/GLOXY4 to yield pneumocandin A0) are sequentially added to the growing chain. The last C domain of gloA/GLNRPS4 is proposed to be responsible for cyclization by condensation to form the peptide bond between L-ornithine and 3S-hydroxyl-4S-methyl-L-proline (for pneumocandin A0) or 3S-hydroxyl-L-proline (for pneumocandin B0). Finally, the subsequent C-4 hydroxylation of 3S-hydroxyl-L-homotyrosine and L-ornithine dihydroxylation at C-4 and C-5 are performed by the cytochrome P450 monooxygenases gloP/GLP450-1 and gloO/GLP450-2, respectively. The sequence is that of Probable thioesterase gloN from Glarea lozoyensis (strain ATCC 20868 / MF5171).